Reading from the N-terminus, the 502-residue chain is MGPNDHGFAYILIFLLLSPPTHANRDANRLFEDLIADYNKLVRPVSENGETLVVTFKLKLSQLLDVHEKNQIMTTNVWLQHSWMDYKLRWDPVEYGGVEVLYVPSDTIWLPDVVLYNNADGNYQVTIMTKAKLTYNGTVEWAPPAIYKSMCQIDVEFFPFDRQQCEMKFGSWTYGGLEVDLQHRDKHLEKEIEEDVEGVDGPTKEIVWVVDRGIDLSDYYPSVEWDILNVPGKRHSKRYPCCESPFIDITYEIHLRRKTLFYTVNLIFPSVGISFLTALVFYLPSDGGEKISLCISILISLTVFFLLLVEIIPSTSLVIPLIGKYLLFTMVLVTLSVVVTVVTLNVHYRSPTTHTMPKWMKRLFVDFLPKYLLMTRPQPPGHHSKPNRKFDSRASTFSIGVNHVLGQNSELLSPGLNSNREESSFTLPRDNSPVRSAVESVAYIADHLKNEEDDKQVIEDWKYISVVMDRIFLITFTFACAFGTVVIIARAPSIYDNTPALA.

The signal sequence occupies residues M1–A23. Residues N24–T263 lie on the Extracellular side of the membrane. A glycan (N-linked (GlcNAc...) asparagine) is linked at N136. A disulfide bridge links C151 with C165. Helical transmembrane passes span V264–P284, L293–P313, and L326–V346. Over H347–R470 the chain is Cytoplasmic. A helical membrane pass occupies residues I471 to A491.

This sequence belongs to the ligand-gated ion channel (TC 1.A.9) family. Acetylcholine receptor (TC 1.A.9.1) subfamily. In terms of assembly, component of nicotinic acetylcholine receptor. In muscles, composed of 2 non-alpha subunits lev-1 and unc-29, and 3 alpha subunits unc-38, unc-63 and lev-8. In cholinergic motoneurons, composed of 2 non-alpha subunits acr-2 and acr-3, and 3 alpha subunits unc-38, unc-63 and acr-12. Interacts with lev-10. As to expression, expressed in body wall muscles, in vulval muscles and in neurons.

It localises to the postsynaptic cell membrane. It is found in the cell membrane. Its function is as follows. Alpha subunit of nicotinic acetylcholine receptor (nAChR). Probably acts in cholinergic motoneurons to regulate presynaptic neurotransmitter release, thereby ensuring normal level of excitation of cholinergic motoneurons during locomotion. Involved in nAChR sensitivity to nicotine and levamisole. The chain is Acetylcholine receptor subunit alpha-type unc-63 (unc-63) from Caenorhabditis elegans.